A 136-amino-acid chain; its full sequence is Histone H3.3 (136 aa).

The disordered stretch occupies residues 1–42; that stretch reads MARTKQTARKSTGGKAPRKQLASKAARKSAPVSGGVKKPHRY. Position 5 is an N6,N6,N6-trimethyllysine; alternate (lysine 5). Residue lysine 5 is modified to N6,N6-dimethyllysine; alternate. 2 positions are modified to N6-methyllysine; alternate: lysine 5 and lysine 10. Position 10 is an N6-acetyllysine; alternate (lysine 10). At serine 11 the chain carries Phosphoserine. Lysine 15 carries the N6,N6-dimethyllysine; alternate modification. Lysine 15, lysine 19, lysine 24, lysine 28, and lysine 37 each carry N6-acetyllysine; alternate. N6-methyllysine; alternate is present on residues lysine 19, lysine 24, lysine 28, and lysine 37. N6,N6,N6-trimethyllysine; alternate occurs at positions 28 and 37. An N6,N6-dimethyllysine; alternate mark is found at lysine 28 and lysine 37. 2 positions are modified to N6-acetyllysine: lysine 57 and lysine 65. N6,N6,N6-trimethyllysine; alternate is present on lysine 80. Lysine 80 carries the N6,N6-dimethyllysine; alternate modification. An N6-methyllysine; alternate modification is found at lysine 80.

Belongs to the histone H3 family. The nucleosome is a histone octamer containing two molecules each of H2A, H2B, H3 and H4 assembled in one H3-H4 heterotetramer and two H2A-H2B heterodimers. The octamer wraps approximately 147 bp of DNA. In terms of processing, phosphorylated by IPL1 to form H3S10ph. H3S10ph promotes subsequent H3K14ac formation and is required for transcriptional activation through TBP recruitment to the promoters. Post-translationally, mono-, di- and trimethylated by the COMPASS complex to form H3K4me1/2/3. H3K4me activates gene expression by regulating transcription elongation and plays a role in telomere length maintenance. H3K4me enrichment correlates with transcription levels, and occurs in a 5' to 3' gradient with H3K4me3 enrichment at the 5'-end of genes, shifting to H3K4me2 and then H3K4me1. Methylated by SET2 to form H3K36me. H3K36me represses gene expression. Methylated by DOT1 to form H3K79me. H3K79me is required for association of SIR proteins with telomeric regions and for telomeric silencing. The COMPASS-mediated formation of H3K4me2/3 and the DOT1-mediated formation of H3K79me require H2BK123ub1. Acetylation of histone H3 leads to transcriptional activation. H3K14ac formation by GCN5 is promoted by H3S10ph. H3K14ac can also be formed by ESA1. H3K56ac formation occurs predominantly in newly synthesized H3 molecules during G1, S and G2/M of the cell cycle and may be involved in DNA repair.

The protein localises to the nucleus. It is found in the chromosome. Functionally, core component of nucleosome. Nucleosomes wrap and compact DNA into chromatin, limiting DNA accessibility to the cellular machineries which require DNA as a template. Histones thereby play a central role in transcription regulation, DNA repair, DNA replication and chromosomal stability. DNA accessibility is regulated via a complex set of post-translational modifications of histones, also called histone code, and nucleosome remodeling. The polypeptide is Histone H3.3 (HHT3) (Candida albicans (strain SC5314 / ATCC MYA-2876) (Yeast)).